A 274-amino-acid polypeptide reads, in one-letter code: 3-methyl-2-oxobutanoate hydroxymethyltransferase (274 aa).

Residues Asp-44 and Asp-83 each contribute to the Mg(2+) site. 3-methyl-2-oxobutanoate is bound by residues 44–45, Asp-83, and Lys-113; that span reads DS. Glu-115 provides a ligand contact to Mg(2+). Glu-182 functions as the Proton acceptor in the catalytic mechanism.

It belongs to the PanB family. Homodecamer; pentamer of dimers. Mg(2+) is required as a cofactor.

It localises to the cytoplasm. The enzyme catalyses 3-methyl-2-oxobutanoate + (6R)-5,10-methylene-5,6,7,8-tetrahydrofolate + H2O = 2-dehydropantoate + (6S)-5,6,7,8-tetrahydrofolate. Its pathway is cofactor biosynthesis; (R)-pantothenate biosynthesis; (R)-pantoate from 3-methyl-2-oxobutanoate: step 1/2. Catalyzes the reversible reaction in which hydroxymethyl group from 5,10-methylenetetrahydrofolate is transferred onto alpha-ketoisovalerate to form ketopantoate. The protein is 3-methyl-2-oxobutanoate hydroxymethyltransferase of Campylobacter jejuni subsp. jejuni serotype O:23/36 (strain 81-176).